A 531-amino-acid polypeptide reads, in one-letter code: MSDLPATVLERIIEQAQRRPEAIALRRCDGTSALPYSELAAEVDRYAGALRAQSASRGSRVLVISDNGPETYLAVLACAKLGAIAVMADGNLPPATIDRFCQITDPVAVLIAPGSKVGSSSLPEGLAAIPAIRVDIGSGTGEFAHSPDTDRPATEPGLGADDPLAMIFTSGTTGEPKAVLLANRTFFAVPDILRNEGLNWVTWVDGETTYSPLPATHIGGLWWILTCLMRGGLCITGGENTPSLMQILNSNAVNTTCLVPTLLSKLVSELKSAATTVPSLRLLGYGGSRAIAADVRFIEATGVRTAQVYGLSETGCTALCLPTDDDSIAKIEAGAVGRPYPGVEVYLAADDEADGAGPNAPGAGPSASFGTLWIKSPANMLGYWSNPQRTQEVLIDGWVNTGDLLERHEDGFFYIKGRSSEMIISGGVNIAPDEVDRIAEGVPGVREAACFEIPDPEFGALVGLAVVAATDMDASAARKLKHTIAAHYRRESESVARPSTIVIVSEIPRTQSGKVMRTSLAAAANQVQTGG.

Residue Thr-169 coordinates Mg(2+). The ATP site is built by Ile-218, Val-308, and Ser-312. Glu-313 lines the Mg(2+) pocket. Asp-403 is a binding site for ATP.

The protein belongs to the ATP-dependent AMP-binding enzyme family. Mg(2+) is required as a cofactor.

The catalysed reaction is a (2E)-enoyl fatty acid + holo-[ACP] + ATP = a (2E)-enoyl-[ACP] + AMP + diphosphate. The enzyme catalyses a (2E)-enoyl fatty acid + ATP + H(+) = a (2E)-2-fatty-enoyl-AMP + diphosphate. It catalyses the reaction a (2E)-2-fatty-enoyl-AMP + holo-[ACP] = a (2E)-enoyl-[ACP] + AMP + H(+). It carries out the reaction (2E)-decenoate + holo-[ACP] + ATP = (2E)-decenoyl-[ACP] + AMP + diphosphate. The catalysed reaction is a (3R)-3-isocyanyl-fatty acid + holo-[ACP] + ATP = a (3R)-3-isocyanyl-fatty acyl-[ACP] + AMP + diphosphate. The enzyme catalyses a (3R)-3-isocyanyl-fatty acid + ATP + H(+) = a (3R)-3-isocyanyl-fatty acyl-AMP + diphosphate. It catalyses the reaction a (3R)-3-isocyanyl-fatty acyl-AMP + holo-[ACP] = a (3R)-3-isocyanyl-fatty acyl-[ACP] + AMP + H(+). Acyl:acyl-carrier protein ligase involved in the biosynthesis of a unique class of isonitrile lipopeptides (INLPs) that seem to play a role in metal acquisition in M.marinum. Acts twice during the INLP pathway, catalyzing the activation of (2E)-2-decenoate as well as probably the corresponding (3R)-3-isocyanyl-fatty acid as acyl-adenylates (acyl-AMP), and then the acyl transfer to the dedicated acyl-carrier protein MmaB. The sequence is that of Fatty acid--[acyl-carrier-protein] ligase MmaC from Mycobacterium marinum (strain ATCC BAA-535 / M).